Here is a 170-residue protein sequence, read N- to C-terminus: Large ribosomal subunit protein uL10 (170 aa).

It belongs to the universal ribosomal protein uL10 family. Part of the ribosomal stalk of the 50S ribosomal subunit. The N-terminus interacts with L11 and the large rRNA to form the base of the stalk. The C-terminus forms an elongated spine to which L12 dimers bind in a sequential fashion forming a multimeric L10(L12)X complex.

Its function is as follows. Forms part of the ribosomal stalk, playing a central role in the interaction of the ribosome with GTP-bound translation factors. The protein is Large ribosomal subunit protein uL10 of Lactobacillus acidophilus (strain ATCC 700396 / NCK56 / N2 / NCFM).